A 343-amino-acid polypeptide reads, in one-letter code: Heat-inducible transcription repressor HrcA (343 aa).

It belongs to the HrcA family.

Negative regulator of class I heat shock genes (grpE-dnaK-dnaJ and groELS operons). Prevents heat-shock induction of these operons. This is Heat-inducible transcription repressor HrcA from Mycobacterium avium (strain 104).